A 256-amino-acid chain; its full sequence is Acetyl-coenzyme A carboxylase carboxyl transferase subunit alpha (256 aa).

One can recognise a CoA carboxyltransferase C-terminal domain in the interval 1-236 (MTDVARILKE…KLHLIDEITQ (236 aa)).

Belongs to the AccA family. In terms of assembly, acetyl-CoA carboxylase is a heterohexamer composed of biotin carboxyl carrier protein (AccB), biotin carboxylase (AccC) and two subunits each of ACCase subunit alpha (AccA) and ACCase subunit beta (AccD).

It localises to the cytoplasm. The catalysed reaction is N(6)-carboxybiotinyl-L-lysyl-[protein] + acetyl-CoA = N(6)-biotinyl-L-lysyl-[protein] + malonyl-CoA. It functions in the pathway lipid metabolism; malonyl-CoA biosynthesis; malonyl-CoA from acetyl-CoA: step 1/1. In terms of biological role, component of the acetyl coenzyme A carboxylase (ACC) complex. First, biotin carboxylase catalyzes the carboxylation of biotin on its carrier protein (BCCP) and then the CO(2) group is transferred by the carboxyltransferase to acetyl-CoA to form malonyl-CoA. The polypeptide is Acetyl-coenzyme A carboxylase carboxyl transferase subunit alpha (Streptococcus equi subsp. zooepidemicus (strain H70)).